The following is a 172-amino-acid chain: Translationally-controlled tumor protein homolog (172 aa).

The 172-residue stretch at 1–172 (MIIYRDCISQ…FKDGLEMEKC (172 aa)) folds into the TCTP domain.

This sequence belongs to the TCTP family. As to expression, expressed by the venom gland.

Its subcellular location is the secreted. In terms of biological role, venom protein that causes edema, enhances vascular permeability and is likely related to the inflammatory activity of the venom. This Crotalus adamanteus (Eastern diamondback rattlesnake) protein is Translationally-controlled tumor protein homolog.